Reading from the N-terminus, the 96-residue chain is Large ribosomal subunit protein uL23 (96 aa).

This sequence belongs to the universal ribosomal protein uL23 family. As to quaternary structure, part of the 50S ribosomal subunit. Contacts protein L29, and trigger factor when it is bound to the ribosome.

Its function is as follows. One of the early assembly proteins it binds 23S rRNA. One of the proteins that surrounds the polypeptide exit tunnel on the outside of the ribosome. Forms the main docking site for trigger factor binding to the ribosome. The polypeptide is Large ribosomal subunit protein uL23 (Nitratidesulfovibrio vulgaris (strain ATCC 29579 / DSM 644 / CCUG 34227 / NCIMB 8303 / VKM B-1760 / Hildenborough) (Desulfovibrio vulgaris)).